A 658-amino-acid chain; its full sequence is Secretin XcpQ (658 aa).

A signal peptide spans 1 to 34 (MSQPLLRALFAPSSRSYVPAVLLSLALGIQAAHA). Residues 51-141 (AHWTINLKDA…TEAGGGQSAP (91 aa)) are N0. Positions 142–205 (DRLETRVIQV…DVIRQLDQKG (64 aa)) are N1. Residues 206 to 279 (SHDYSVINLR…SLDTPTARSA (74 aa)) form an N2 region. Positions 280 to 365 (NTRVIRLRHN…VPRAQVLVEA (86 aa)) are N3. Positions 302 to 322 (SEGMKNNGGQGGEQTGGGRPS) are disordered. The segment covering 307–320 (NNGGQGGEQTGGGR) has biased composition (gly residues). The secretin stretch occupies residues 368–606 (VEISGDIQDA…VFLRPTVVRD (239 aa)). Residues 608–658 (AGLAALSGKKYSDIRVIDGTRGPEGRPSILPTNANQLFDGQAVDLRELMTE) form a s domain region.

Belongs to the bacterial secretin family. GSP D subfamily. Forms a cylindrical channel with 15 subunits. The closed pentadecameric channel is 170 Angstroms long and 140 Angstroms in diameter.

It localises to the cell outer membrane. Functionally, involved in a type II secretion system (T2SS, formerly general secretion pathway, GSP) for the export of proteins. This subunit forms the outer membrane channel. Among its substrates are PrpL, elastase LasB, chitin binding protein D (CbpD), aminopeptidase PaAP, and metalloprotease ImpA. The protein is Secretin XcpQ of Pseudomonas aeruginosa (strain ATCC 15692 / DSM 22644 / CIP 104116 / JCM 14847 / LMG 12228 / 1C / PRS 101 / PAO1).